We begin with the raw amino-acid sequence, 259 residues long: Taurine import ATP-binding protein TauB (259 aa).

Residues 4–233 (LELERISAQY…RYAAGESARA (230 aa)) form the ABC transporter domain. 38 to 45 (GPSGSGKT) serves as a coordination point for ATP.

Belongs to the ABC transporter superfamily. Taurine importer (TC 3.A.1.17.1) family. The complex is composed of two ATP-binding proteins (TauB), two transmembrane proteins (TauC) and a solute-binding protein (TauA).

Its subcellular location is the cell inner membrane. The catalysed reaction is taurine(out) + ATP + H2O = taurine(in) + ADP + phosphate + H(+). Part of the ABC transporter complex TauABC involved in taurine import. Responsible for energy coupling to the transport system. This is Taurine import ATP-binding protein TauB from Pseudomonas entomophila (strain L48).